Reading from the N-terminus, the 253-residue chain is Triosephosphate isomerase (253 aa).

A substrate-binding site is contributed by 9-11 (NWK). Catalysis depends on His98, which acts as the Electrophile. Glu170 (proton acceptor) is an active-site residue. Substrate-binding positions include Gly176, Ser216, and 237–238 (GG).

The protein belongs to the triosephosphate isomerase family. In terms of assembly, homodimer.

It localises to the cytoplasm. It carries out the reaction D-glyceraldehyde 3-phosphate = dihydroxyacetone phosphate. The protein operates within carbohydrate biosynthesis; gluconeogenesis. Its pathway is carbohydrate degradation; glycolysis; D-glyceraldehyde 3-phosphate from glycerone phosphate: step 1/1. In terms of biological role, involved in the gluconeogenesis. Catalyzes stereospecifically the conversion of dihydroxyacetone phosphate (DHAP) to D-glyceraldehyde-3-phosphate (G3P). The protein is Triosephosphate isomerase of Amoebophilus asiaticus (strain 5a2).